A 149-amino-acid chain; its full sequence is Calmodulin (149 aa).

An N-acetylalanine modification is found at Ala2. 4 EF-hand domains span residues 8 to 43, 44 to 79, 81 to 116, and 117 to 149; these read EQIS…LGQN, PTEA…KMRD, DSEE…LGEK, and LTDN…MLSK. 20 residues coordinate Ca(2+): Asp21, Asp23, Asp25, Thr27, Glu32, Asp57, Asp59, Asn61, Thr63, Glu68, Asp94, Asp96, Asn98, Tyr100, Glu105, Asp130, Asp132, Asp134, Gln136, and Glu141.

This sequence belongs to the calmodulin family.

Functionally, calmodulin mediates the control of a large number of enzymes, ion channels and other proteins by Ca(2+). Among the enzymes to be stimulated by the calmodulin-Ca(2+) complex are a number of protein kinases and phosphatases. This Pleurotus ostreatus (Oyster mushroom) protein is Calmodulin (CMD1).